The following is a 111-amino-acid chain: MIQVLLVIICLAVFPYQGSCIILESGNVNDYEIVYPKKLIVLPTGAMNSPHPCCDPVTCKPKKGEHCISGPCCRNCKFINSGTICKRARGDDMNDYCTGTTPDCPRNPYKD.

The signal sequence occupies residues 1 to 20; the sequence is MIQVLLVIICLAVFPYQGSC. The propeptide occupies 21–47; it reads IILESGNVNDYEIVYPKKLIVLPTGAM. Residues 47–111 form the Disintegrin domain; that stretch reads MNSPHPCCDP…PDCPRNPYKD (65 aa). Cystine bridges form between C53/C76, C67/C73, C72/C97, and C85/C104. A Cell attachment site motif is present at residues 89–91; that stretch reads RGD.

As to quaternary structure, heterodimer; disulfide-linked.

The protein resides in the secreted. Its function is as follows. Inhibits ADP-induced platelet aggregation in human platelet-rich plasma (IC(50) is 8 uM). This chain is Disintegrin DS-AS, found in Atheris squamigera (Variable bush viper).